The chain runs to 338 residues: Glycerol-3-phosphate dehydrogenase [NAD(P)+] (338 aa).

The NADPH site is built by S13, W14, and K108. Sn-glycerol 3-phosphate is bound by residues K108, G139, and S141. A143 lines the NADPH pocket. Positions 194, 247, 257, 258, and 259 each coordinate sn-glycerol 3-phosphate. Catalysis depends on K194, which acts as the Proton acceptor. Residue R258 coordinates NADPH. NADPH contacts are provided by V282 and E284.

Belongs to the NAD-dependent glycerol-3-phosphate dehydrogenase family.

It localises to the cytoplasm. The catalysed reaction is sn-glycerol 3-phosphate + NAD(+) = dihydroxyacetone phosphate + NADH + H(+). It catalyses the reaction sn-glycerol 3-phosphate + NADP(+) = dihydroxyacetone phosphate + NADPH + H(+). It participates in membrane lipid metabolism; glycerophospholipid metabolism. In terms of biological role, catalyzes the reduction of the glycolytic intermediate dihydroxyacetone phosphate (DHAP) to sn-glycerol 3-phosphate (G3P), the key precursor for phospholipid synthesis. The protein is Glycerol-3-phosphate dehydrogenase [NAD(P)+] of Streptococcus pneumoniae (strain JJA).